A 329-amino-acid polypeptide reads, in one-letter code: ATPase ASNA1 homolog 1 (329 aa).

26-33 (KGGVGKTT) lines the ATP pocket. The active site involves Asp-55. Glu-235 and Asn-262 together coordinate ATP. Residues Cys-271 and Cys-274 each coordinate Zn(2+).

This sequence belongs to the arsA ATPase family. In terms of assembly, homodimer.

It is found in the cytoplasm. It localises to the endoplasmic reticulum. Functionally, ATPase required for the post-translational delivery of tail-anchored (TA) proteins to the endoplasmic reticulum. Recognizes and selectively binds the transmembrane domain of TA proteins in the cytosol. This complex then targets to the endoplasmic reticulum by membrane-bound receptors, where the tail-anchored protein is released for insertion. This process is regulated by ATP binding and hydrolysis. ATP binding drives the homodimer towards the closed dimer state, facilitating recognition of newly synthesized TA membrane proteins. ATP hydrolysis is required for insertion. Subsequently, the homodimer reverts towards the open dimer state, lowering its affinity for the membrane-bound receptor, and returning it to the cytosol to initiate a new round of targeting. This Paramecium tetraurelia protein is ATPase ASNA1 homolog 1.